The chain runs to 114 residues: MVIRVYIASSSGSTAIKKKQQDVLGFLEANKIGFEEKDIAANEENRKWMRENVPENSRPATGYPLPPQIFNESQYRGDYDAFFEARENNAVYAFLGLTAPPGSKEAEVQAKQQA.

The tract at residues 13-50 (STAIKKKQQDVLGFLEANKIGFEEKDIAANEENRKWMR) is required for interaction with HER2. Residues 54-71 (PENSRPATGYPLPPQIFN) form a required for interaction with PFN1, HER2, and ATG12 region. The SH3-binding motif lies at 61–67 (TGYPLPP).

Belongs to the SH3BGR family. As to quaternary structure, monomer. Interacts with PFN1/Profilin-1. Interacts with ERBB2. Interacts with ATG12. Interacts with BECN1. Interacts with translating ribosomes. As to expression, ubiquitous.

It is found in the cytoplasm. It localises to the cytosol. The protein resides in the cell membrane. In terms of biological role, appears to function as an adapter protein that bridges proteins together or proteins with mRNAs. May function as a ubiquitin ligase-substrate adapter. Additionally, associates with translating cytoplasmic ribosomes and may promote the expression of specific mRNAs. This is Adapter SH3BGRL from Homo sapiens (Human).